The primary structure comprises 186 residues: ADP-ribosylation factor-like protein 6 (186 aa).

G2 carries N-myristoyl glycine lipidation. Residues 24–31, T50, 69–73, G72, 130–133, and A164 each bind GTP; these read GLDNSGKT, DMSGQ, and NKMD. Residue T50 coordinates Mg(2+).

Belongs to the small GTPase superfamily. Arf family. As to quaternary structure, interacts with SEC61B, ARL6IP1, ARL6IP2, ARL6IP3, ARL6IP4 ARL6IP5 and ARL6IP6. Interacts (GTP-bound form) with the BBSome a complex that contains BBS1, BBS2, BBS4, BBS5, BBS7, BBS8/TTC8, BBS9 and BBIP10. Interacts (GTP-free form) with IFT27.

It localises to the cell projection. The protein resides in the cilium membrane. It is found in the cytoplasm. The protein localises to the cytoskeleton. Its subcellular location is the cilium axoneme. It localises to the cilium basal body. Its function is as follows. Involved in membrane protein trafficking at the base of the ciliary organelle. Mediates recruitment onto plasma membrane of the BBSome complex which would constitute a coat complex required for sorting of specific membrane proteins to the primary cilia. Together with the BBSome complex and LTZL1, controls SMO ciliary trafficking and contributes to the sonic hedgehog (SHH) pathway regulation. May regulate cilia assembly and disassembly and subsequent ciliary signaling events such as the Wnt signaling cascade. Isoform 2 may be required for proper retinal function and organization. The chain is ADP-ribosylation factor-like protein 6 (ARL6) from Pongo abelii (Sumatran orangutan).